We begin with the raw amino-acid sequence, 740 residues long: 1,4-alpha-glucan branching enzyme GlgB (740 aa).

Aspartate 419 (nucleophile) is an active-site residue. Catalysis depends on glutamate 472, which acts as the Proton donor.

It belongs to the glycosyl hydrolase 13 family. GlgB subfamily. In terms of assembly, monomer.

It carries out the reaction Transfers a segment of a (1-&gt;4)-alpha-D-glucan chain to a primary hydroxy group in a similar glucan chain.. It functions in the pathway glycan biosynthesis; glycogen biosynthesis. Catalyzes the formation of the alpha-1,6-glucosidic linkages in glycogen by scission of a 1,4-alpha-linked oligosaccharide from growing alpha-1,4-glucan chains and the subsequent attachment of the oligosaccharide to the alpha-1,6 position. The protein is 1,4-alpha-glucan branching enzyme GlgB of Thiobacillus denitrificans (strain ATCC 25259 / T1).